Consider the following 91-residue polypeptide: uncharacterized protein (91 aa).

This is an uncharacterized protein from Acidianus convivator (ABV).